A 657-amino-acid chain; its full sequence is Zinc finger protein 630 (657 aa).

Residues 8-79 (VTFEDVAVDF…ESELSRWIYP (72 aa)) form the KRAB domain. 2 consecutive C2H2-type zinc fingers follow at residues 263–285 (NVCSMCGKAFIKKSQLIIHQRIH) and 291–313 (YVCGDCRKAFSEKSHLIVHQRIH). The segment at 319 to 341 (YECTKYGRAFSRKSPFTVHQRVH) adopts a C2H2-type 3; degenerate zinc-finger fold. 9 C2H2-type zinc fingers span residues 347 to 369 (YECFECPKAFSQKSHLIIHQRVH), 375 to 397 (FECSECRKAFCEMSHLFIHQITH), 403 to 425 (YECTECGKTFPRKTQLIIHQRTH), 431 to 453 (YKCGECGKTFCQQSHLIGHQRIH), 459 to 481 (YVCTDCGKAFSQKSHLTGHQRLH), 487 to 509 (YMCTECGKSFSQKSPLIIHQRIH), 515 to 537 (YQCGECGKTFSQKSLLIIHLRVH), 543 to 565 (YECTECGRAFSLKSHLILHQRGH), and 571 to 593 (YECSECGKAFCGKSPLIIHQKTH). The C2H2-type 13; degenerate zinc finger occupies 599-621 (PECAESGMTFFWKSQMITYQRRH). The C2H2-type 14; degenerate zinc-finger motif lies at 627–649 (SRCSDCGKAFCQHVYFTGHQNPY).

The protein belongs to the krueppel C2H2-type zinc-finger protein family.

Its subcellular location is the nucleus. Functionally, may be involved in transcriptional regulation. The chain is Zinc finger protein 630 (ZNF630) from Homo sapiens (Human).